The primary structure comprises 334 residues: Ephrin-B1 (334 aa).

An N-terminal signal peptide occupies residues 1–25 (MARPRGGRWLLGVLLALCRLAAPLA). The Ephrin RBD domain occupies 26-160 (KSLEPVSWSA…TRSMKIVMKV (135 aa)). Topologically, residues 26-231 (KSLEPVSWSA…FLSSKVAVFA (206 aa)) are extracellular. 2 disulfides stabilise this stretch: Cys-60-Cys-97 and Cys-85-Cys-149. An N-linked (GlcNAc...) asparagine glycan is attached at Asn-135. Residues 175-218 (SRPSKEADNTVKIVTQSPRHKVPTVEEPGKPGSVNQNGQETQGP) are disordered. The span at 207 to 218 (SVNQNGQETQGP) shows a compositional bias: polar residues. Residues 232–252 (AIGAGCVIFILIIIFLVVLLI) form a helical membrane-spanning segment. The Cytoplasmic segment spans residues 253–334 (KIRKRHRKHT…QSPANIYYKV (82 aa)). Positions 332–334 (YKV) match the PDZ-binding motif.

The protein belongs to the ephrin family. Binds to the receptor tyrosine kinase EPHB2. Interacts with GRIP1 and GRIP2. Post-translationally, inducible phosphorylation of tyrosine residues in the cytoplasmic domain.

It localises to the membrane. Cell surface transmembrane ligand for Eph receptors, a family of receptor tyrosine kinases which are crucial for migration, repulsion and adhesion during neuronal, vascular and epithelial development. Binds promiscuously Eph receptors residing on adjacent cells, leading to contact-dependent bidirectional signaling into neighboring cells. The signaling pathway downstream of the receptor is referred to as forward signaling while the signaling pathway downstream of the ephrin ligand is referred to as reverse signaling. The chain is Ephrin-B1 (EFNB1) from Gallus gallus (Chicken).